The primary structure comprises 306 residues: Palmitoyl-protein thioesterase ABHD10, mitochondrial (306 aa).

The transit peptide at 1-52 directs the protein to the mitochondrion; sequence MAVARLAAVAAWVPCRSWGWAAVPFGPHRGLSVLLARIPQRAPRWLPACRQK. Residues 78–178 enclose the AB hydrolase-1 domain; the sequence is IIFIPGYLSY…VVALIGVATA (101 aa). Catalysis depends on charge relay system residues Ser-152, Asp-249, and His-279.

Belongs to the AB hydrolase superfamily.

It localises to the mitochondrion. It carries out the reaction S-hexadecanoyl-L-cysteinyl-[protein] + H2O = L-cysteinyl-[protein] + hexadecanoate + H(+). The catalysed reaction is mycophenolic acid O-acyl-beta-D-glucuronide + H2O = mycophenolate + D-glucuronate + H(+). Its activity is regulated as follows. Inhibited by palmostatin-B. Functionally, acts as an acyl-protein thioesterase that hydrolyzes fatty acids from acylated residues in proteins. Regulates the mitochondrial S-depalmitoylation of the nucleophilic active site residue of peroxiredoxin-5/PRDX5, a key antioxidant protein, therefore modulating mitochondrial antioxidant ability. Also catalyzes the deglucuronidation of mycophenolic acid acyl-glucuronide, an active metabolite of the immunosuppressant drug mycophenolate. The sequence is that of Palmitoyl-protein thioesterase ABHD10, mitochondrial from Homo sapiens (Human).